A 378-amino-acid polypeptide reads, in one-letter code: MEILWFIPTHGDGRYLGTQTGGRTADHLYFKQVAQAADRLGYTGVLLPTGRSCEDPWLTAAALAGETSDLKFLVAVRPGLMQPSVAARMASTMDRLSDGRLLVNVVAGGDPYELAGDGMFISHDERYKATEEFLTVWRGLMRGETVTYEGDHIKVENSNLLFPPKQSPHPPLYFGGSSQAGIEAAAKHTDVYLTWGEPPEQVKEKIETVKKQAAKEGRTMRFGIRLHVIVRETEEEAWEAAERLISHLDEETIAKAQAALRRADSSGQKRMAGLHNGDRSKLEISPNLWAGIGLVRGGAGTALVGDPQTVATRILEYQALGIESFIFSGYPHLEEAYYLAELVFPLLPFQNERTKKLERRLGEAMGNDHFARGKKAKV.

It belongs to the SsuD family.

It catalyses the reaction an alkanesulfonate + FMNH2 + O2 = an aldehyde + FMN + sulfite + H2O + 2 H(+). Functionally, catalyzes the desulfonation of aliphatic sulfonates. This is Alkanesulfonate monooxygenase from Bacillus velezensis (strain DSM 23117 / BGSC 10A6 / LMG 26770 / FZB42) (Bacillus amyloliquefaciens subsp. plantarum).